Consider the following 51-residue polypeptide: LVNQHLCGSHLVEALYLVCGERGFFYTPKAGIVEQCCNSICSLYQLETYCN.

Cystine bridges form between Cys-7/Cys-37, Cys-19/Cys-50, and Cys-36/Cys-41.

This sequence belongs to the insulin family. In terms of assembly, heterodimer of a B chain and an A chain linked by two disulfide bonds.

The protein resides in the secreted. Its function is as follows. Insulin decreases blood glucose concentration. It increases cell permeability to monosaccharides, amino acids and fatty acids. It accelerates glycolysis, the pentose phosphate cycle, and glycogen synthesis in liver. The chain is Insulin (INS) from Didelphis virginiana (North American opossum).